Here is a 341-residue protein sequence, read N- to C-terminus: HTH-type transcriptional repressor PurR (341 aa).

The 55-residue stretch at A2–V56 folds into the HTH lacI-type domain. A DNA-binding region (H-T-H motif) is located at residues I4–N23. The DNA-binding element occupies S48 to V56. Y73, R190, T192, F221, and D275 together coordinate hypoxanthine.

In terms of assembly, homodimer.

It participates in purine metabolism; purine nucleotide biosynthesis [regulation]. Functionally, is the main repressor of the genes involved in the de novo synthesis of purine nucleotides, regulating purB, purC, purEK, purF, purHD, purL, purMN and guaBA expression. PurR is allosterically activated to bind its cognate DNA by binding the purine corepressors, hypoxanthine or guanine, thereby effecting transcription repression. The sequence is that of HTH-type transcriptional repressor PurR from Salmonella typhimurium (strain LT2 / SGSC1412 / ATCC 700720).